Consider the following 315-residue polypeptide: Methionyl-tRNA formyltransferase (315 aa).

107–110 (SLLP) lines the (6S)-5,6,7,8-tetrahydrofolate pocket.

It belongs to the Fmt family.

It catalyses the reaction L-methionyl-tRNA(fMet) + (6R)-10-formyltetrahydrofolate = N-formyl-L-methionyl-tRNA(fMet) + (6S)-5,6,7,8-tetrahydrofolate + H(+). Functionally, attaches a formyl group to the free amino group of methionyl-tRNA(fMet). The formyl group appears to play a dual role in the initiator identity of N-formylmethionyl-tRNA by promoting its recognition by IF2 and preventing the misappropriation of this tRNA by the elongation apparatus. This Borrelia garinii subsp. bavariensis (strain ATCC BAA-2496 / DSM 23469 / PBi) (Borreliella bavariensis) protein is Methionyl-tRNA formyltransferase.